Here is a 545-residue protein sequence, read N- to C-terminus: Glucose-6-phosphate isomerase (545 aa).

Glu351 acts as the Proton donor in catalysis. Active-site residues include His382 and Lys510.

Belongs to the GPI family.

Its subcellular location is the cytoplasm. The catalysed reaction is alpha-D-glucose 6-phosphate = beta-D-fructose 6-phosphate. It participates in carbohydrate biosynthesis; gluconeogenesis. The protein operates within carbohydrate degradation; glycolysis; D-glyceraldehyde 3-phosphate and glycerone phosphate from D-glucose: step 2/4. Functionally, catalyzes the reversible isomerization of glucose-6-phosphate to fructose-6-phosphate. This is Glucose-6-phosphate isomerase from Shewanella sp. (strain MR-7).